Reading from the N-terminus, the 382-residue chain is Low-specificity L-threonine aldolase (382 aa).

Lysine 214 bears the N6-(pyridoxal phosphate)lysine mark.

It belongs to the threonine aldolase family. In terms of assembly, homotetramer. It depends on pyridoxal 5'-phosphate as a cofactor.

The catalysed reaction is L-threonine = acetaldehyde + glycine. It catalyses the reaction L-allo-threonine = acetaldehyde + glycine. The protein operates within amino-acid degradation; L-threonine degradation via aldolase pathway; acetaldehyde and glycine from L-threonine: step 1/1. In Eremothecium gossypii (strain ATCC 10895 / CBS 109.51 / FGSC 9923 / NRRL Y-1056) (Yeast), this protein is Low-specificity L-threonine aldolase (GLY1).